A 137-amino-acid polypeptide reads, in one-letter code: Large ribosomal subunit protein uL16 (137 aa).

The protein belongs to the universal ribosomal protein uL16 family. Part of the 50S ribosomal subunit.

Functionally, binds 23S rRNA and is also seen to make contacts with the A and possibly P site tRNAs. The protein is Large ribosomal subunit protein uL16 of Psychrobacter cryohalolentis (strain ATCC BAA-1226 / DSM 17306 / VKM B-2378 / K5).